The chain runs to 119 residues: Large ribosomal subunit protein uL18 (119 aa).

The protein belongs to the universal ribosomal protein uL18 family. Part of the 50S ribosomal subunit; part of the 5S rRNA/L5/L18/L25 subcomplex. Contacts the 5S and 23S rRNAs.

In terms of biological role, this is one of the proteins that bind and probably mediate the attachment of the 5S RNA into the large ribosomal subunit, where it forms part of the central protuberance. This chain is Large ribosomal subunit protein uL18, found in Clostridium botulinum (strain Okra / Type B1).